We begin with the raw amino-acid sequence, 559 residues long: Formate--tetrahydrofolate ligase (559 aa).

67–74 (TPAGEGKS) lines the ATP pocket.

This sequence belongs to the formate--tetrahydrofolate ligase family.

It catalyses the reaction (6S)-5,6,7,8-tetrahydrofolate + formate + ATP = (6R)-10-formyltetrahydrofolate + ADP + phosphate. The protein operates within one-carbon metabolism; tetrahydrofolate interconversion. This is Formate--tetrahydrofolate ligase from Lactobacillus delbrueckii subsp. bulgaricus (strain ATCC BAA-365 / Lb-18).